An 85-amino-acid chain; its full sequence is Large ribosomal subunit protein bL27 (85 aa).

The disordered stretch occupies residues 1–20 (MAHKKAGGSTRNGRDSESKR).

Belongs to the bacterial ribosomal protein bL27 family.

The chain is Large ribosomal subunit protein bL27 from Yersinia enterocolitica serotype O:8 / biotype 1B (strain NCTC 13174 / 8081).